We begin with the raw amino-acid sequence, 362 residues long: 3-isopropylmalate dehydrogenase (362 aa).

78 to 91 (GYKWDSLPPHQRPE) is a binding site for NAD(+). The substrate site is built by Arg98, Arg108, Arg136, and Asp226. Mg(2+) is bound by residues Asp226, Asp250, and Asp254. 284–296 (GSAPDIAGLDKAN) provides a ligand contact to NAD(+).

This sequence belongs to the isocitrate and isopropylmalate dehydrogenases family. LeuB type 1 subfamily. In terms of assembly, homodimer. Mg(2+) is required as a cofactor. Mn(2+) serves as cofactor.

It is found in the cytoplasm. The enzyme catalyses (2R,3S)-3-isopropylmalate + NAD(+) = 4-methyl-2-oxopentanoate + CO2 + NADH. The protein operates within amino-acid biosynthesis; L-leucine biosynthesis; L-leucine from 3-methyl-2-oxobutanoate: step 3/4. In terms of biological role, catalyzes the oxidation of 3-carboxy-2-hydroxy-4-methylpentanoate (3-isopropylmalate) to 3-carboxy-4-methyl-2-oxopentanoate. The product decarboxylates to 4-methyl-2 oxopentanoate. The protein is 3-isopropylmalate dehydrogenase of Trichormus variabilis (strain ATCC 29413 / PCC 7937) (Anabaena variabilis).